The primary structure comprises 117 residues: Immunoglobulin heavy variable 3-48 (117 aa).

Residues 1-19 form the signal peptide; the sequence is MELGLCWVFLVAILEGVQC. Residues 20–44 are framework-1; the sequence is EVQLVESGGGLVQPGGSLRLSCAAS. The 98-residue stretch at 20–117 folds into the Ig-like domain; it reads EVQLVESGGG…EDTAVYYCAR (98 aa). Cysteines 41 and 115 form a disulfide. The interval 45 to 52 is complementarity-determining-1; that stretch reads GFTFSSYE. Residues 53–69 are framework-2; sequence MNWVRQAPGKGLEWVSY. Residues 70–77 are complementarity-determining-2; the sequence is ISSSGSTI. The interval 78 to 115 is framework-3; it reads YYADSVKGRFTISRDNAKNSLYLQMNSLRAEDTAVYYC. The segment at 116-117 is complementarity-determining-3; that stretch reads AR.

As to quaternary structure, immunoglobulins are composed of two identical heavy chains and two identical light chains; disulfide-linked. In terms of processing, the N-terminus is blocked.

It is found in the secreted. The protein resides in the cell membrane. Functionally, v region of the variable domain of immunoglobulin heavy chains that participates in the antigen recognition. Immunoglobulins, also known as antibodies, are membrane-bound or secreted glycoproteins produced by B lymphocytes. In the recognition phase of humoral immunity, the membrane-bound immunoglobulins serve as receptors which, upon binding of a specific antigen, trigger the clonal expansion and differentiation of B lymphocytes into immunoglobulins-secreting plasma cells. Secreted immunoglobulins mediate the effector phase of humoral immunity, which results in the elimination of bound antigens. The antigen binding site is formed by the variable domain of one heavy chain, together with that of its associated light chain. Thus, each immunoglobulin has two antigen binding sites with remarkable affinity for a particular antigen. The variable domains are assembled by a process called V-(D)-J rearrangement and can then be subjected to somatic hypermutations which, after exposure to antigen and selection, allow affinity maturation for a particular antigen. This is Immunoglobulin heavy variable 3-48 from Homo sapiens (Human).